The following is a 450-amino-acid chain: UDP-N-acetylmuramoylalanine--D-glutamate ligase (450 aa).

An ATP-binding site is contributed by 119–125 (GSNGKTT).

Belongs to the MurCDEF family.

Its subcellular location is the cytoplasm. It carries out the reaction UDP-N-acetyl-alpha-D-muramoyl-L-alanine + D-glutamate + ATP = UDP-N-acetyl-alpha-D-muramoyl-L-alanyl-D-glutamate + ADP + phosphate + H(+). Its pathway is cell wall biogenesis; peptidoglycan biosynthesis. Cell wall formation. Catalyzes the addition of glutamate to the nucleotide precursor UDP-N-acetylmuramoyl-L-alanine (UMA). The polypeptide is UDP-N-acetylmuramoylalanine--D-glutamate ligase (Streptococcus pneumoniae (strain ATCC BAA-255 / R6)).